A 705-amino-acid polypeptide reads, in one-letter code: Structure-specific endonuclease subunit SLX1 homolog (705 aa).

The 87-residue stretch at 4–90 folds into the GIY-YIG domain; it reads RFHCVYLLTS…TASARLRHAI (87 aa). Disordered stretches follow at residues 155–192 and 290–323; these read RASS…DSKG and ASFA…RVHT. 2 stretches are compositionally biased toward polar residues: residues 160–175 and 310–320; these read RVGT…SLQG and STGSRTPSPQR. The SLX1-type zinc-finger motif lies at 446–526; it reads CSLCTLPLQP…PSQPCPCPLC (81 aa). Low complexity predominate over residues 595–604; the sequence is KGAGEAPGAA. The segment at 595–628 is disordered; that stretch reads KGAGEAPGAASTVRASTMHVGPARRDAPRVSSPS.

It belongs to the SLX1 family. In terms of assembly, forms a heterodimer with a member of the SLX4 family. The cofactor is a divalent metal cation.

Its subcellular location is the nucleus. Catalytic subunit of a heterodimeric structure-specific endonuclease that resolves DNA secondary structures generated during DNA repair and recombination. Has endonuclease activity towards branched DNA substrates, introducing single-strand cuts in duplex DNA close to junctions with ss-DNA. In Leishmania infantum, this protein is Structure-specific endonuclease subunit SLX1 homolog.